Consider the following 405-residue polypeptide: Acetate kinase (405 aa).

Mg(2+) is bound at residue Asn7. Lys14 serves as a coordination point for ATP. Arg99 lines the substrate pocket. The active-site Proton donor/acceptor is Asp156. ATP contacts are provided by residues 215 to 219 (HLGNG), 290 to 292 (DMR), and 338 to 342 (GVGEH). Glu391 provides a ligand contact to Mg(2+).

The protein belongs to the acetokinase family. As to quaternary structure, homodimer. The cofactor is Mg(2+). Requires Mn(2+) as cofactor.

The protein localises to the cytoplasm. It catalyses the reaction acetate + ATP = acetyl phosphate + ADP. The protein operates within metabolic intermediate biosynthesis; acetyl-CoA biosynthesis; acetyl-CoA from acetate: step 1/2. Catalyzes the formation of acetyl phosphate from acetate and ATP. Can also catalyze the reverse reaction. This chain is Acetate kinase, found in Nostoc punctiforme (strain ATCC 29133 / PCC 73102).